The primary structure comprises 412 residues: Putative pectate lyase 11 (412 aa).

A signal peptide spans 1–24 (MVSYSNNHFAYAFLLLLTIGNTLA). 3 residues coordinate Ca(2+): aspartate 210, aspartate 234, and aspartate 238. Arginine 290 is an active-site residue.

This sequence belongs to the polysaccharide lyase 1 family. Ca(2+) is required as a cofactor.

It catalyses the reaction Eliminative cleavage of (1-&gt;4)-alpha-D-galacturonan to give oligosaccharides with 4-deoxy-alpha-D-galact-4-enuronosyl groups at their non-reducing ends.. It functions in the pathway glycan metabolism; pectin degradation; 2-dehydro-3-deoxy-D-gluconate from pectin: step 2/5. This is Putative pectate lyase 11 from Arabidopsis thaliana (Mouse-ear cress).